The primary structure comprises 313 residues: GMP synthase [glutamine-hydrolyzing] subunit B (313 aa).

Positions 6–190 (KVWEKFIEEK…LGLPEKIYNR (185 aa)) constitute a GMPS ATP-PPase domain. ATP is bound at residue 33-39 (SGGVDSS).

As to quaternary structure, heterodimer composed of a glutamine amidotransferase subunit (A) and a GMP-binding subunit (B).

It carries out the reaction XMP + L-glutamine + ATP + H2O = GMP + L-glutamate + AMP + diphosphate + 2 H(+). Its pathway is purine metabolism; GMP biosynthesis; GMP from XMP (L-Gln route): step 1/1. Its function is as follows. Catalyzes the synthesis of GMP from XMP. This is GMP synthase [glutamine-hydrolyzing] subunit B (guaAB) from Pyrococcus furiosus (strain ATCC 43587 / DSM 3638 / JCM 8422 / Vc1).